Reading from the N-terminus, the 407-residue chain is MSNAVKKTGVKKVVLAYSGGLDTSAIIPWLKETYDDCEIIAFCADVGQGEEELVGLTEKALASGASECHIVDLKEEFVADYIYPTIATGAIYEGTYLLGTSMARPIIAKAQVEVARKVGADAVCHGCTGKGNDQVRFEGCFAALAPDLKVIAPWREWEMRSREDLLAYLAERDIKTSASATKIYSRDANAWHISHEGGELEDPWNEPSKGVWTLTVAPEDAPNEPEYVSLAVKHGRVTHVNDEALSPYAALMKLNDIAGKHGVGRIDITENRLVGMKSRGCYETPGGTVMFAGLRAIEELVLDKTSRTWREQIAGQMSHLVYDGRWFTPLCKSLIAASESLAESVNGDVVIKLYKGQATAVKKRSPNSLYSESFATFGEDDVYDQKHAEGFIRLYSLASRIRALNTK.

ATP is bound by residues 16 to 24 (AYSGGLDTS) and A44. 2 residues coordinate L-citrulline: Y96 and S101. G126 lines the ATP pocket. The L-aspartate site is built by T128, N132, and D133. Residue N132 coordinates L-citrulline. L-citrulline is bound by residues R136, S185, S194, E270, and Y282.

Belongs to the argininosuccinate synthase family. Type 1 subfamily. As to quaternary structure, homotetramer.

It is found in the cytoplasm. It catalyses the reaction L-citrulline + L-aspartate + ATP = 2-(N(omega)-L-arginino)succinate + AMP + diphosphate + H(+). Its pathway is amino-acid biosynthesis; L-arginine biosynthesis; L-arginine from L-ornithine and carbamoyl phosphate: step 2/3. The polypeptide is Argininosuccinate synthase (Shewanella frigidimarina (strain NCIMB 400)).